Reading from the N-terminus, the 200-residue chain is Ras-related protein Rab-10 (200 aa).

The GTP site is built by Ser-18, Gly-19, Val-20, Gly-21, Lys-22, Thr-23, Cys-24, Asn-35, Thr-36, Ser-40, and Thr-41. Mg(2+) is bound at residue Thr-23. 2 consecutive short sequence motifs (switch) follow at residues 32–46 (DAFN…GIDF) and 64–81 (DTAG…YYRG). Mg(2+)-binding residues include Thr-41 and Asp-64. GTP-binding residues include Gly-67, Asn-122, Lys-123, Asp-125, Met-126, Ser-152, Ala-153, and Lys-154. Positions 181–200 (RENVDISTTGGGTGLKKCCS) are disordered. S-geranylgeranyl cysteine attachment occurs at residues Cys-198 and Cys-199.

It belongs to the small GTPase superfamily. Rab family. It depends on Mg(2+) as a cofactor.

It is found in the cytoplasmic vesicle membrane. Its subcellular location is the golgi apparatus. The protein localises to the trans-Golgi network membrane. It localises to the endosome membrane. The protein resides in the recycling endosome membrane. It is found in the cytoplasmic vesicle. Its subcellular location is the phagosome membrane. The protein localises to the cell projection. It localises to the cilium. The protein resides in the endoplasmic reticulum membrane. The catalysed reaction is GTP + H2O = GDP + phosphate + H(+). Its activity is regulated as follows. Regulated by guanine nucleotide exchange factors (GEFs) which promote the exchange of bound GDP for free GTP. Regulated by GTPase activating proteins (GAPs) which increase the GTP hydrolysis activity. Inhibited by GDP dissociation inhibitors (GDIs) which prevent Rab-GDP dissociation. Functionally, the small GTPases Rab are key regulators of intracellular membrane trafficking, from the formation of transport vesicles to their fusion with membranes. Rabs cycle between an inactive GDP-bound form and an active GTP-bound form that is able to recruit to membranes different set of downstream effectors directly responsible for vesicle formation, movement, tethering and fusion. That Rab is mainly involved in the biosynthetic transport of proteins from the Golgi to the plasma membrane. Also plays a specific role in asymmetric protein transport to the plasma membrane within the polarized neuron and epithelial cells. In neurons, it is involved in axonogenesis through regulation of vesicular membrane trafficking toward the axonal plasma membrane while in epithelial cells, it regulates transport from the Golgi to the basolateral membrane. Moreover, may play a role in the basolateral recycling pathway and in phagosome maturation. Finally, may play a role in endoplasmic reticulum dynamics and morphology controlling tubulation along microtubules and tubules fusion. May participate in the export of neosynthesized proteins through a Rab-dependent endosomal export route. This is Ras-related protein Rab-10 from Diplobatis ommata (Ocellated electric ray).